A 1243-amino-acid polypeptide reads, in one-letter code: Serine/threonine-protein kinase WNK4 (1243 aa).

The segment covering 1-17 (MLASPATETTVLMSQTE) has biased composition (polar residues). The segment at 1 to 142 (MLASPATETT…GPGSREPLRV (142 aa)) is disordered. Residues 65-77 (VDLGLLSSWSLPA) are compositionally biased toward low complexity. Over residues 78–103 (SPAPDPPDPPDSAGPGPARSPPPSSK) the composition is skewed to pro residues. A Phosphoserine modification is found at Ser-97. The span at 118 to 127 (AAEDSARPEL) shows a compositional bias: basic and acidic residues. Residues Lys-157 and Lys-175 each participate in a glycyl lysine isopeptide (Lys-Gly) (interchain with G-Cter in ubiquitin) cross-link. The Protein kinase domain occupies 174 to 432 (LKFDIEIGRG…IQDLLAHAFF (259 aa)). Ser-184 provides a ligand contact to ATP. Glycyl lysine isopeptide (Lys-Gly) (interchain with G-Cter in ubiquitin) cross-links involve residues Lys-186, Lys-226, and Lys-241. Residues 254–257 (TELM) and Lys-304 contribute to the ATP site. Asp-321 (proton acceptor) is an active-site residue. A Glycyl lysine isopeptide (Lys-Gly) (interchain with G-Cter in ubiquitin) cross-link involves residue Lys-328. A phosphoserine; by autocatalysis mark is found at Ser-331 and Ser-335. Glycyl lysine isopeptide (Lys-Gly) (interchain with G-Cter in ubiquitin) cross-links involve residues Lys-387, Lys-393, Lys-450, and Lys-454. A disordered region spans residues 526–564 (KARELEALPPEPGPPPATVPMAPGPPSVFPPEPEEPEAD). A compositionally biased stretch (pro residues) spans 534–556 (PPEPGPPPATVPMAPGPPSVFPP). Residues 557-567 (EPEEPEADQHQ) form an interaction with KLHL3 region. Phosphoserine is present on Ser-575. The span at 630 to 641 (SGPGSDFSPGDS) shows a compositional bias: low complexity. 3 disordered regions span residues 630–683 (SGPG…SVSD), 751–871 (DTGP…STPE), and 943–1110 (SPSP…SPVW). Basic residues predominate over residues 663–676 (PPGRNLRRRPRSRL). Pro residues predominate over residues 767-780 (EPAPLPALPVPLPD). Residues 797 to 812 (WTAFSTSSSSPGTPLS) show a composition bias toward low complexity. Over residues 822–843 (PISPGPIFPITSPPCHPSPSPF) the composition is skewed to pro residues. 3 stretches are compositionally biased toward low complexity: residues 844-854 (SPISSQVSSNP), 862-871 (PLPFSSSTPE), and 943-952 (SPSPGLLSQS). The segment covering 953–970 (PPAPPSPLPSLPLPPPVA) has biased composition (pro residues). A Glycyl lysine isopeptide (Lys-Gly) (interchain with G-Cter in ubiquitin) cross-link involves residue Lys-1010. The short motif at 1016 to 1019 (RFQV) is the RFXV motif element. Phosphoserine is present on Ser-1035. Residues 1065–1077 (ETREALAESDRAA) are compositionally biased toward basic and acidic residues. Glycyl lysine isopeptide (Lys-Gly) (interchain with G-Cter in ubiquitin) cross-links involve residues Lys-1144, Lys-1157, and Lys-1158. Residues 1166–1243 (RLGKQPPPGI…VTFAGDVGRM (78 aa)) form a disordered region. Composition is skewed to polar residues over residues 1193–1204 (SFPTSRRNSLQR) and 1216–1228 (NSLSGSSTGSQEQ). The residue at position 1217 (Ser-1217) is a Phosphoserine.

Belongs to the protein kinase superfamily. Ser/Thr protein kinase family. WNK subfamily. As to quaternary structure, interacts with the C-terminal region of KCNJ1. Requires Mg(2+) as cofactor. Autophosphorylated at Ser-331 and Ser-335, promoting its activation. Phosphorylated by WNK1 and WNK3. Phosphorylated at Ser-575 in a MAP3K15/ASK3-dependent process in response to osmotic stress or hypotonic low-chloride stimulation. Post-translationally, ubiquitinated by the BCR(KLHL3) complex, leading to its degradation. Also ubiquitinated by the BCR(KLHL2) complex. As to expression, expressed in kidney, colon and skin.

The protein resides in the cell junction. The protein localises to the tight junction. It catalyses the reaction L-seryl-[protein] + ATP = O-phospho-L-seryl-[protein] + ADP + H(+). The catalysed reaction is L-threonyl-[protein] + ATP = O-phospho-L-threonyl-[protein] + ADP + H(+). With respect to regulation, activation requires autophosphorylation of Ser-331 and Ser-335. Autophosphorylation and subsequent activation is inhibited by increases in intracellular ionic strength: Cl(-) potently inhibits WNK4 kinase activity via direct binding. Also inhibited by K(+) ions. Functionally, serine/threonine-protein kinase component of the WNK4-SPAK/OSR1 kinase cascade, which acts as a key regulator of ion transport in the distal nephron and blood pressure. The WNK4-SPAK/OSR1 kinase cascade is composed of WNK4, which mediates phosphorylation and activation of downstream kinases OXSR1/OSR1 and STK39/SPAK. Following activation, OXSR1/OSR1 and STK39/SPAK catalyze phosphorylation of ion cotransporters, such as SLC12A1/NKCC2, SLC12A2/NKCC1, SLC12A3/NCC, SLC12A5/KCC2 or SLC12A6/KCC3, regulating their activity. Acts as a molecular switch that regulates the balance between renal salt reabsorption and K(+) secretion by modulating the activities of renal transporters and channels, including the Na-Cl cotransporter SLC12A3/NCC and the K(+) channel, KCNJ1/ROMK. Regulates NaCl reabsorption in the distal nephron by activating the thiazide-sensitive Na-Cl cotransporter SLC12A3/NCC in distal convoluted tubule cells of kidney: activates SLC12A3/NCC in a OXSR1/OSR1- and STK39/SPAK-dependent process. Also acts as a scaffold protein independently of its protein kinase activity: negatively regulates cell membrane localization of various transporters and channels (CFTR, KCNJ1/ROMK, SLC4A4, SLC26A9 and TRPV4) by clathrin-dependent endocytosis. Also inhibits the activity of the epithelial Na(+) channel (ENaC) SCNN1A, SCNN1B, SCNN1D in a inase-independent mechanism. May also phosphorylate NEDD4L. The chain is Serine/threonine-protein kinase WNK4 from Homo sapiens (Human).